Here is a 345-residue protein sequence, read N- to C-terminus: L-threonine 3-dehydrogenase (345 aa).

Residue C39 participates in Zn(2+) binding. Catalysis depends on charge relay system residues T41 and H44. H64, E65, C94, C97, C100, and C108 together coordinate Zn(2+). NAD(+) is bound by residues I176, D196, R201, 263-265 (LGI), and 287-288 (VY).

It belongs to the zinc-containing alcohol dehydrogenase family. In terms of assembly, homotetramer. Zn(2+) serves as cofactor.

The protein resides in the cytoplasm. It catalyses the reaction L-threonine + NAD(+) = (2S)-2-amino-3-oxobutanoate + NADH + H(+). Its pathway is amino-acid degradation; L-threonine degradation via oxydo-reductase pathway; glycine from L-threonine: step 1/2. Functionally, catalyzes the NAD(+)-dependent oxidation of L-threonine to 2-amino-3-ketobutyrate. This Anaeromyxobacter dehalogenans (strain 2CP-1 / ATCC BAA-258) protein is L-threonine 3-dehydrogenase.